The primary structure comprises 295 residues: Ethanolamine ammonia-lyase small subunit (295 aa).

Adenosylcob(III)alamin contacts are provided by Val-207, Glu-228, and Cys-258.

This sequence belongs to the EutC family. In terms of assembly, the basic unit is a heterodimer which dimerizes to form tetramers. The heterotetramers trimerize; 6 large subunits form a core ring with 6 small subunits projecting outwards. Requires adenosylcob(III)alamin as cofactor.

It is found in the bacterial microcompartment. It carries out the reaction ethanolamine = acetaldehyde + NH4(+). Its pathway is amine and polyamine degradation; ethanolamine degradation. Its function is as follows. Catalyzes the deamination of various vicinal amino-alcohols to oxo compounds. Allows this organism to utilize ethanolamine as the sole source of nitrogen and carbon in the presence of external vitamin B12. The chain is Ethanolamine ammonia-lyase small subunit from Escherichia coli O157:H7.